A 189-amino-acid chain; its full sequence is UPF0301 protein PputGB1_5045 (189 aa).

Belongs to the UPF0301 (AlgH) family.

This is UPF0301 protein PputGB1_5045 from Pseudomonas putida (strain GB-1).